We begin with the raw amino-acid sequence, 172 residues long: Large ribosomal subunit protein uL10 (172 aa).

It belongs to the universal ribosomal protein uL10 family. As to quaternary structure, part of the ribosomal stalk of the 50S ribosomal subunit. The N-terminus interacts with L11 and the large rRNA to form the base of the stalk. The C-terminus forms an elongated spine to which L12 dimers bind in a sequential fashion forming a multimeric L10(L12)X complex.

Forms part of the ribosomal stalk, playing a central role in the interaction of the ribosome with GTP-bound translation factors. This chain is Large ribosomal subunit protein uL10, found in Methylorubrum populi (strain ATCC BAA-705 / NCIMB 13946 / BJ001) (Methylobacterium populi).